The following is a 236-amino-acid chain: Ribose-5-phosphate isomerase A (236 aa).

Residues 28-31 (TGST), 83-86 (DGAD), and 96-99 (KGGG) each bind substrate. Residue Glu105 is the Proton acceptor of the active site. Lys123 lines the substrate pocket.

This sequence belongs to the ribose 5-phosphate isomerase family. Homodimer.

It carries out the reaction aldehydo-D-ribose 5-phosphate = D-ribulose 5-phosphate. Its pathway is carbohydrate degradation; pentose phosphate pathway; D-ribose 5-phosphate from D-ribulose 5-phosphate (non-oxidative stage): step 1/1. Catalyzes the reversible conversion of ribose-5-phosphate to ribulose 5-phosphate. This is Ribose-5-phosphate isomerase A from Methylorubrum extorquens (strain CM4 / NCIMB 13688) (Methylobacterium extorquens).